The chain runs to 136 residues: MQTTKALLISPVLIRSCTRGLIRPVSASLLSRPEAPSKKPSCCSSPLQVARREFQTSVISRDIDTAAKFIGAGAATVGVAGSGAGIGTVFGSLIIGYARNPSLKQQLFSYAILGFALSEAMGLFCLMVAFLILFAM.

The transit peptide at 1-61 (MQTTKALLIS…REFQTSVISR (61 aa)) directs the protein to the mitochondrion. A helical membrane pass occupies residues 77 to 97 (VGVAGSGAGIGTVFGSLIIGY). Lys-104 carries the post-translational modification N6,N6,N6-trimethyllysine. A helical transmembrane segment spans residues 112–132 (ILGFALSEAMGLFCLMVAFLI).

The protein belongs to the ATPase C chain family. Homooctamer; the c-ring consists of eight c subunits forming a circle, and each subunit adopts a hairpin shape. Component of the ATP synthase complex composed at least of ATP5F1A/subunit alpha, ATP5F1B/subunit beta, ATP5MC1/subunit c (homooctomer), MT-ATP6/subunit a, MT-ATP8/subunit 8, ATP5ME/subunit e, ATP5MF/subunit f, ATP5MG/subunit g, ATP5MK/subunit k, ATP5MJ/subunit j, ATP5F1C/subunit gamma, ATP5F1D/subunit delta, ATP5F1E/subunit epsilon, ATP5PF/subunit F6, ATP5PB/subunit b, ATP5PD/subunit d, ATP5PO/subunit OSCP. ATP synthase complex consists of a soluble F(1) head domain (subunits alpha(3) and beta(3)) - the catalytic core - and a membrane F(0) domain - the membrane proton channel (subunits c, a, 8, e, f, g, k and j). These two domains are linked by a central stalk (subunits gamma, delta, and epsilon) rotating inside the F1 region and a stationary peripheral stalk (subunits F6, b, d, and OSCP). Interacts with TMEM70 (homooligomer form); this interaction facilitates the oligomer formation of subunit c/ATP5MC1 (c-ring) and the c-ring membrane insertion and also protects ATP5MC1 against intramitochondrial proteolysis. In terms of processing, trimethylated by ATPSCKMT at Lys-104. Methylation is required for proper incorporation of the C subunit into the ATP synthase complex and mitochondrial respiration.

The protein localises to the mitochondrion membrane. The catalysed reaction is H(+)(in) = H(+)(out). Its function is as follows. Subunit c, of the mitochondrial membrane ATP synthase complex (F(1)F(0) ATP synthase or Complex V) that produces ATP from ADP in the presence of a proton gradient across the membrane which is generated by electron transport complexes of the respiratory chain. ATP synthase complex consist of a soluble F(1) head domain - the catalytic core - and a membrane F(1) domain - the membrane proton channel. These two domains are linked by a central stalk rotating inside the F(1) region and a stationary peripheral stalk. During catalysis, ATP synthesis in the catalytic domain of F(1) is coupled via a rotary mechanism of the central stalk subunits to proton translocation. With the subunit a (MT-ATP6), forms the proton-conducting channel in the F(0) domain, that contains two crucial half-channels (inlet and outlet) that facilitate proton movement from the mitochondrial intermembrane space (IMS) into the matrix. Protons are taken up via the inlet half-channel and released through the outlet half-channel, following a Grotthuss mechanism. In Rattus norvegicus (Rat), this protein is ATP synthase F(0) complex subunit C1, mitochondrial.